A 798-amino-acid polypeptide reads, in one-letter code: KLRAQPAANDPGTDKTIKYSKIQSIIQKINSFTHENSLLANCRAVVELIDDLYRKLYSWFLHVLTFEDIQFPGDTFLDRLLKMDYCFTYYPSSNRHLIDLFEKTLDNQTFTNLDKFFDTSGNSPELLYQKTFSLKIFSKNLTAQDNGLYIYPLLKTDLSILDFLGTENILFHRGLIYHILHQKTIPQERENDLNKINQFFATVIQQVIETKSSCLPASLSQLLDTIFHFNRIGLNMETCRTYIEILSNHMATPDTQPIINTFTINLTHIVFTAHVFFICMENFSPTFIFYNRKKLILEQQRAILIIERNDYSTLWKQISDHIDCLFNVSLSESFFKEYTKGGNEDQKQFLYKNLFEKWGNVFFPFTYSVSTSNNSTAHHITTLELRDICKEVYQSDSPDAYESLLPYSTHPSFKTLYVKIYVIPMVSHITNLTFDKLQSDCRLLTLIHACKLLLPSQHLLLHYMAWLYAFSINVDHIDLGTFTVIKSVIFKIADHINVMTHTIYSPETNLLVSILLNAYTNYLQKYVNPWIKQTITANFSLIQTYITFTKQCASILATKCNINLDNLFIYITIGTDKIVTTSFCSFIATCRNLVRQHEEFEKSLQTIQISETTLTGMLRNIITSVSSSKELLTNEALQKFIDTVQRISQHVNETYQSISMNLEKCKTSNDILIESLKKIIYIVDVLSSNAILNTSLASRCLEAANLAVSNNSFTILEIKKDAVAVFKPFITQLFESMKPTTSLHKKLMSTQKLTTDHIPFLDTFDDRYNLVRHVERQLNWYAAHAEAAQQDLITPLKF.

It belongs to the herpesviridae HHV-1 UL37 family.

The protein resides in the virion tegument. This chain is Capsid assembly protein UL37 homolog (U30), found in Homo sapiens (Human).